The following is a 109-amino-acid chain: Large ribosomal subunit protein bL19 (109 aa).

It belongs to the bacterial ribosomal protein bL19 family.

Its function is as follows. This protein is located at the 30S-50S ribosomal subunit interface and may play a role in the structure and function of the aminoacyl-tRNA binding site. The protein is Large ribosomal subunit protein bL19 of Rubrobacter xylanophilus (strain DSM 9941 / JCM 11954 / NBRC 16129 / PRD-1).